We begin with the raw amino-acid sequence, 257 residues long: NAD kinase (257 aa).

The active-site Proton acceptor is Asp46. Residues 46 to 47 (DG), 116 to 117 (NE), Asp146, Ala154, and 157 to 162 (TAYNLS) contribute to the NAD(+) site.

The protein belongs to the NAD kinase family. Requires a divalent metal cation as cofactor.

Its subcellular location is the cytoplasm. The enzyme catalyses NAD(+) + ATP = ADP + NADP(+) + H(+). Functionally, involved in the regulation of the intracellular balance of NAD and NADP, and is a key enzyme in the biosynthesis of NADP. Catalyzes specifically the phosphorylation on 2'-hydroxyl of the adenosine moiety of NAD to yield NADP. The chain is NAD kinase from Mesorhizobium japonicum (strain LMG 29417 / CECT 9101 / MAFF 303099) (Mesorhizobium loti (strain MAFF 303099)).